The sequence spans 68 residues: Large ribosomal subunit protein bL33c (68 aa).

The protein belongs to the bacterial ribosomal protein bL33 family.

The protein localises to the plastid. Its subcellular location is the chloroplast. The polypeptide is Large ribosomal subunit protein bL33c (Nymphaea alba (White water-lily)).